The chain runs to 321 residues: Outer envelope protein 36, chloroplastic (321 aa).

Belongs to the OEP80 (TC 1.B.33.2) family. In terms of tissue distribution, expressed in germinating seeds.

The protein localises to the plastid. It is found in the chloroplast outer membrane. May play a role during plastid development. In Arabidopsis thaliana (Mouse-ear cress), this protein is Outer envelope protein 36, chloroplastic.